The sequence spans 940 residues: Acetyl-coenzyme A synthetase (940 aa).

The N-terminal stretch at 1 to 33 (MCCAIWSASRAPACSASQLSSSHAVRPSVVPDA) is a signal peptide. The segment at 1 to 289 (MCCAIWSASR…VQRSVTRLTA (289 aa)) is unknown. Disordered stretches follow at residues 70-127 (TARA…RPRC), 157-202 (VAPP…ADSA), and 224-274 (ASSQ…QQTC). Polar residues-rich tracts occupy residues 72–95 (RATT…TAAS) and 107–120 (SSIS…TSGS). Composition is skewed to low complexity over residues 184-202 (TAPP…ADSA) and 224-245 (ASSQ…SGRS). Polar residues predominate over residues 258–274 (SSPTVQRNQTTVHQQTC). Residues 290 to 940 (MSNPSHAEVP…SVFEAIRASK (651 aa)) are acetyl-coenzyme A synthetase. Residues 480-483 (RRGK) and threonine 599 each bind CoA. ATP-binding positions include 675-677 (GEP), 699-704 (DTWWQT), aspartate 796, and arginine 811. Serine 819 contacts CoA. An ATP-binding site is contributed by arginine 822. 3 residues coordinate Mg(2+): valine 833, histidine 835, and valine 838. Lysine 906 is modified (N6-acetyllysine).

The protein belongs to the ATP-dependent AMP-binding enzyme family. It depends on Mg(2+) as a cofactor. In terms of processing, acetylated on Lys-906 by Pat in the presence of acetyl-CoA as an acetyl donor and ATP. Acetylation results in the inactivation of the enzyme. Deacetylation by the SIR2-homolog deacetylase CobB is required to activate the enzyme.

The catalysed reaction is acetate + ATP + CoA = acetyl-CoA + AMP + diphosphate. In terms of biological role, catalyzes the conversion of acetate into acetyl-CoA (AcCoA), an essential intermediate at the junction of anabolic and catabolic pathways. AcsA undergoes a two-step reaction. In the first half reaction, AcsA combines acetate with ATP to form acetyl-adenylate (AcAMP) intermediate. In the second half reaction, it can then transfer the acetyl group from AcAMP to the sulfhydryl group of CoA, forming the product AcCoA. This is Acetyl-coenzyme A synthetase (acsA) from Mycolicibacterium smegmatis (strain ATCC 700084 / mc(2)155) (Mycobacterium smegmatis).